A 533-amino-acid polypeptide reads, in one-letter code: Acetone monooxygenase (methyl acetate-forming) (533 aa).

FAD is bound by residues 43-46 (TWYW), 55-56 (DS), and tyrosine 61. 53–55 (RFD) is an NADP(+) binding site. NADP(+) is bound by residues 183 to 189 (NGATGIQ), 206 to 207 (RT), and tryptophan 492.

It belongs to the FAD-binding monooxygenase family. As to quaternary structure, homotetramer. FAD is required as a cofactor.

The enzyme catalyses acetone + NADPH + O2 + H(+) = methyl acetate + NADP(+) + H2O. Plays an important role in the metabolism of acetone derived from propane oxidation. Catalyzes the oxidation of acetone to methyl acetate. Exhibits high catalytic efficiency towards various linear and cyclic ketones, such as butanone, 2-pentanone, 2-heptanone, 2-octanone, 2-nonanone, 2-decanone, cyclobutanone, cyclopentanone and cyclohexanone. Elicits the highest catalytic efficiency towards butanone and cyclobutanone. Is highly specific for NADPH and cannot use NADH. The polypeptide is Acetone monooxygenase (methyl acetate-forming) (Gordonia sp. (strain TY-5)).